A 465-amino-acid polypeptide reads, in one-letter code: Glutamate--tRNA ligase 1 (465 aa).

The short motif at 8–18 is the 'HIGH' region element; the sequence is PSPTGNLHIGG. Residues 236–240 carry the 'KMSKS' region motif; the sequence is KLSKR. An ATP-binding site is contributed by Lys-239.

Belongs to the class-I aminoacyl-tRNA synthetase family. Glutamate--tRNA ligase type 1 subfamily. As to quaternary structure, monomer.

It localises to the cytoplasm. It carries out the reaction tRNA(Glu) + L-glutamate + ATP = L-glutamyl-tRNA(Glu) + AMP + diphosphate. Catalyzes the attachment of glutamate to tRNA(Glu) in a two-step reaction: glutamate is first activated by ATP to form Glu-AMP and then transferred to the acceptor end of tRNA(Glu). The chain is Glutamate--tRNA ligase 1 from Wolinella succinogenes (strain ATCC 29543 / DSM 1740 / CCUG 13145 / JCM 31913 / LMG 7466 / NCTC 11488 / FDC 602W) (Vibrio succinogenes).